Here is a 399-residue protein sequence, read N- to C-terminus: 3-sulfinopropanoyl-CoA desulfinase (399 aa).

Residues 121-124, S130, and 153-156 contribute to the FAD site; these read ICIS and YWIT. 244–245 is a binding site for substrate; that stretch reads YN. FAD contacts are provided by residues R273, Q340, S344, 367–371, and Q388; that span reads GGTAQ.

It belongs to the acyl-CoA dehydrogenase family. Homotrimer or homotetramer. FAD serves as cofactor.

It carries out the reaction 3-sulfinopropanoyl-CoA + H2O = propanoyl-CoA + sulfite + H(+). In terms of biological role, catalyzes the conversion 3-sulfinopropanoyl-CoA (3SP-CoA) to propanoyl-CoA by abstraction of sulfite. Does not show dehydrogenase activity. The chain is 3-sulfinopropanoyl-CoA desulfinase from Variovorax paradoxus.